The sequence spans 279 residues: 3-methyl-2-oxobutanoate hydroxymethyltransferase (279 aa).

2 residues coordinate Mg(2+): aspartate 44 and aspartate 83. Residues 44-45 (DS), aspartate 83, and lysine 112 each bind 3-methyl-2-oxobutanoate. Glutamate 114 lines the Mg(2+) pocket. The active-site Proton acceptor is glutamate 181.

Belongs to the PanB family. Homodecamer; pentamer of dimers. It depends on Mg(2+) as a cofactor.

It localises to the cytoplasm. It catalyses the reaction 3-methyl-2-oxobutanoate + (6R)-5,10-methylene-5,6,7,8-tetrahydrofolate + H2O = 2-dehydropantoate + (6S)-5,6,7,8-tetrahydrofolate. Its pathway is cofactor biosynthesis; coenzyme A biosynthesis. Catalyzes the reversible reaction in which hydroxymethyl group from 5,10-methylenetetrahydrofolate is transferred onto alpha-ketoisovalerate to form ketopantoate. This Nitrosopumilus maritimus (strain SCM1) protein is 3-methyl-2-oxobutanoate hydroxymethyltransferase.